Here is a 546-residue protein sequence, read N- to C-terminus: CTP synthase (546 aa).

An amidoligase domain region spans residues 1–266; it reads MTTNYIFVTG…DDLVCQRFGI (266 aa). Position 14 (Ser-14) interacts with CTP. Ser-14 serves as a coordination point for UTP. ATP-binding positions include 15–20 and Asp-72; that span reads SLGKGI. Mg(2+) is bound by residues Asp-72 and Glu-140. CTP is bound by residues 147–149, 187–192, and Lys-223; these read DIE and KTKPTQ. UTP-binding positions include 187 to 192 and Lys-223; that span reads KTKPTQ. ATP is bound at residue 239 to 241; that stretch reads KDV. The region spanning 291–542 is the Glutamine amidotransferase type-1 domain; that stretch reads VIGMVGKYIE…VKAAGESVRG (252 aa). Residue Gly-352 coordinates L-glutamine. Cys-379 serves as the catalytic Nucleophile; for glutamine hydrolysis. L-glutamine is bound by residues 380 to 383, Glu-403, and Arg-470; that span reads LGMQ. Active-site residues include His-515 and Glu-517.

Belongs to the CTP synthase family. Homotetramer.

The enzyme catalyses UTP + L-glutamine + ATP + H2O = CTP + L-glutamate + ADP + phosphate + 2 H(+). It catalyses the reaction L-glutamine + H2O = L-glutamate + NH4(+). It carries out the reaction UTP + NH4(+) + ATP = CTP + ADP + phosphate + 2 H(+). It functions in the pathway pyrimidine metabolism; CTP biosynthesis via de novo pathway; CTP from UDP: step 2/2. With respect to regulation, allosterically activated by GTP, when glutamine is the substrate; GTP has no effect on the reaction when ammonia is the substrate. The allosteric effector GTP functions by stabilizing the protein conformation that binds the tetrahedral intermediate(s) formed during glutamine hydrolysis. Inhibited by the product CTP, via allosteric rather than competitive inhibition. Its function is as follows. Catalyzes the ATP-dependent amination of UTP to CTP with either L-glutamine or ammonia as the source of nitrogen. Regulates intracellular CTP levels through interactions with the four ribonucleotide triphosphates. This chain is CTP synthase, found in Aliivibrio fischeri (strain MJ11) (Vibrio fischeri).